The following is a 94-amino-acid chain: Pyrimidine/purine nucleoside phosphorylase (94 aa).

The protein belongs to the nucleoside phosphorylase PpnP family.

The enzyme catalyses a purine D-ribonucleoside + phosphate = a purine nucleobase + alpha-D-ribose 1-phosphate. It catalyses the reaction adenosine + phosphate = alpha-D-ribose 1-phosphate + adenine. The catalysed reaction is cytidine + phosphate = cytosine + alpha-D-ribose 1-phosphate. It carries out the reaction guanosine + phosphate = alpha-D-ribose 1-phosphate + guanine. The enzyme catalyses inosine + phosphate = alpha-D-ribose 1-phosphate + hypoxanthine. It catalyses the reaction thymidine + phosphate = 2-deoxy-alpha-D-ribose 1-phosphate + thymine. The catalysed reaction is uridine + phosphate = alpha-D-ribose 1-phosphate + uracil. It carries out the reaction xanthosine + phosphate = alpha-D-ribose 1-phosphate + xanthine. Its function is as follows. Catalyzes the phosphorolysis of diverse nucleosides, yielding D-ribose 1-phosphate and the respective free bases. Can use uridine, adenosine, guanosine, cytidine, thymidine, inosine and xanthosine as substrates. Also catalyzes the reverse reactions. This chain is Pyrimidine/purine nucleoside phosphorylase, found in Teredinibacter turnerae (strain ATCC 39867 / T7901).